An 89-amino-acid polypeptide reads, in one-letter code: Small ribosomal subunit protein uS15 (89 aa).

Belongs to the universal ribosomal protein uS15 family. In terms of assembly, part of the 30S ribosomal subunit. Forms a bridge to the 50S subunit in the 70S ribosome, contacting the 23S rRNA.

Its function is as follows. One of the primary rRNA binding proteins, it binds directly to 16S rRNA where it helps nucleate assembly of the platform of the 30S subunit by binding and bridging several RNA helices of the 16S rRNA. Forms an intersubunit bridge (bridge B4) with the 23S rRNA of the 50S subunit in the ribosome. This is Small ribosomal subunit protein uS15 from Shewanella denitrificans (strain OS217 / ATCC BAA-1090 / DSM 15013).